The sequence spans 320 residues: Cytochrome f (320 aa).

The signal sequence occupies residues 1–35 (MQTRKTFSWIKEQINRSISVSLMIYIITRPSISIA). The heme site is built by tyrosine 36, cysteine 56, cysteine 59, and histidine 60. A helical transmembrane segment spans residues 286-306 (VQGLLFFLASVILAQIFLVLK).

This sequence belongs to the cytochrome f family. The 4 large subunits of the cytochrome b6-f complex are cytochrome b6, subunit IV (17 kDa polypeptide, petD), cytochrome f and the Rieske protein, while the 4 small subunits are PetG, PetL, PetM and PetN. The complex functions as a dimer. Heme serves as cofactor.

It is found in the plastid. The protein localises to the chloroplast thylakoid membrane. In terms of biological role, component of the cytochrome b6-f complex, which mediates electron transfer between photosystem II (PSII) and photosystem I (PSI), cyclic electron flow around PSI, and state transitions. This chain is Cytochrome f, found in Daucus carota (Wild carrot).